The following is a 340-amino-acid chain: Ribose-phosphate pyrophosphokinase (340 aa).

ATP is bound by residues 47–49 (NGE) and 106–107 (RQ). Mg(2+) is bound by residues H140 and D182. Residue K206 is part of the active site. Residues R208, D234, and 238-242 (DTAGT) each bind D-ribose 5-phosphate.

Belongs to the ribose-phosphate pyrophosphokinase family. Class I subfamily. In terms of assembly, homohexamer. The cofactor is Mg(2+).

Its subcellular location is the cytoplasm. The catalysed reaction is D-ribose 5-phosphate + ATP = 5-phospho-alpha-D-ribose 1-diphosphate + AMP + H(+). It functions in the pathway metabolic intermediate biosynthesis; 5-phospho-alpha-D-ribose 1-diphosphate biosynthesis; 5-phospho-alpha-D-ribose 1-diphosphate from D-ribose 5-phosphate (route I): step 1/1. Involved in the biosynthesis of the central metabolite phospho-alpha-D-ribosyl-1-pyrophosphate (PRPP) via the transfer of pyrophosphoryl group from ATP to 1-hydroxyl of ribose-5-phosphate (Rib-5-P). This chain is Ribose-phosphate pyrophosphokinase, found in Bifidobacterium longum (strain NCC 2705).